The following is a 92-amino-acid chain: Cell division protein FtsB (92 aa).

Residues 1-3 (MRF) are Cytoplasmic-facing. Residues 4–21 (FQVGLLCLALFVQYRLWF) traverse the membrane as a helical segment. Topologically, residues 22–92 (GHNGVQDYTR…TFIRVLPAQQ (71 aa)) are periplasmic. The stretch at 40 to 73 (LQTNEKLIKRNKVLTADIEDLKLGHEGIEERARN) forms a coiled coil.

This sequence belongs to the FtsB family. Part of a complex composed of FtsB, FtsL and FtsQ.

It is found in the cell inner membrane. Functionally, essential cell division protein. May link together the upstream cell division proteins, which are predominantly cytoplasmic, with the downstream cell division proteins, which are predominantly periplasmic. This is Cell division protein FtsB from Pseudoalteromonas translucida (strain TAC 125).